Reading from the N-terminus, the 213-residue chain is Peptidyl-prolyl cis-trans isomerase B (213 aa).

The N-terminal stretch at 1–23 (MAVLRVLCGLLLVSILFLGFVLS) is a signal peptide. The PPIase cyclophilin-type domain occupies 35–197 (FFDIEVDEQP…KSVKIANCGH (163 aa)). Positions 210-213 (DAAE) match the Prevents secretion from ER motif.

It belongs to the cyclophilin-type PPIase family. PPIase B subfamily.

The protein localises to the endoplasmic reticulum lumen. It carries out the reaction [protein]-peptidylproline (omega=180) = [protein]-peptidylproline (omega=0). With respect to regulation, inhibited by cyclosporin A (CsA). PPIases accelerate the folding of proteins. It catalyzes the cis-trans isomerization of proline imidic peptide bonds in oligopeptides. In Schistosoma japonicum (Blood fluke), this protein is Peptidyl-prolyl cis-trans isomerase B.